Consider the following 191-residue polypeptide: Leucyl/phenylalanyl-tRNA--protein transferase (191 aa).

The protein belongs to the L/F-transferase family.

Its subcellular location is the cytoplasm. It catalyses the reaction N-terminal L-lysyl-[protein] + L-leucyl-tRNA(Leu) = N-terminal L-leucyl-L-lysyl-[protein] + tRNA(Leu) + H(+). The enzyme catalyses N-terminal L-arginyl-[protein] + L-leucyl-tRNA(Leu) = N-terminal L-leucyl-L-arginyl-[protein] + tRNA(Leu) + H(+). The catalysed reaction is L-phenylalanyl-tRNA(Phe) + an N-terminal L-alpha-aminoacyl-[protein] = an N-terminal L-phenylalanyl-L-alpha-aminoacyl-[protein] + tRNA(Phe). Functions in the N-end rule pathway of protein degradation where it conjugates Leu, Phe and, less efficiently, Met from aminoacyl-tRNAs to the N-termini of proteins containing an N-terminal arginine or lysine. This is Leucyl/phenylalanyl-tRNA--protein transferase from Trichormus variabilis (strain ATCC 29413 / PCC 7937) (Anabaena variabilis).